Reading from the N-terminus, the 269-residue chain is 1-(5-phosphoribosyl)-5-[(5-phosphoribosylamino)methylideneamino] imidazole-4-carboxamide isomerase (269 aa).

Asp-10 (proton acceptor) is an active-site residue. The active-site Proton donor is Asp-132.

Belongs to the HisA/HisF family.

The protein resides in the cytoplasm. The enzyme catalyses 1-(5-phospho-beta-D-ribosyl)-5-[(5-phospho-beta-D-ribosylamino)methylideneamino]imidazole-4-carboxamide = 5-[(5-phospho-1-deoxy-D-ribulos-1-ylimino)methylamino]-1-(5-phospho-beta-D-ribosyl)imidazole-4-carboxamide. The protein operates within amino-acid biosynthesis; L-histidine biosynthesis; L-histidine from 5-phospho-alpha-D-ribose 1-diphosphate: step 4/9. This is 1-(5-phosphoribosyl)-5-[(5-phosphoribosylamino)methylideneamino] imidazole-4-carboxamide isomerase from Xylella fastidiosa (strain M12).